A 1040-amino-acid chain; its full sequence is Exosome RNA helicase MTR4 (1040 aa).

Alanine 2 carries the post-translational modification N-acetylalanine. The disordered stretch occupies residues 16-77; sequence DSTSAAGAKK…GTDEPIFGKK (62 aa). Residues 23–33 are compositionally biased toward basic and acidic residues; the sequence is AKKDKEKEKWK. Lysine 24 participates in a covalent cross-link: Glycyl lysine isopeptide (Lys-Gly) (interchain with G-Cter in SUMO2). Serine 38 is modified (phosphoserine). Over residues 41–50 the composition is skewed to basic and acidic residues; it reads KAGKRLDTKL. N6-acetyllysine is present on residues lysine 49 and lysine 76. ATP contacts are provided by residues isoleucine 137, 159–166, serine 162, glycine 164, lysine 165, and threonine 166; that span reads AHTSAGKT. In terms of domain architecture, Helicase ATP-binding spans 146 to 302; that stretch reads IQCVDNNQSV…WICHLHKQPC (157 aa). The DEIH box motif lies at 250–253; that stretch reads DEIH. Lysine 356 participates in a covalent cross-link: Glycyl lysine isopeptide (Lys-Gly) (interchain with G-Cter in SUMO2). Residues 403-575 form the Helicase C-terminal domain; it reads QMTKLDFNTD…NMVLNLLRVE (173 aa). Residues lysine 682 and lysine 721 each participate in a glycyl lysine isopeptide (Lys-Gly) (interchain with G-Cter in SUMO2) cross-link.

The protein belongs to the helicase family. SKI2 subfamily. In terms of assembly, component of a TRAMP-like complex, an ATP-dependent exosome regulatory complex consisting of a helicase (MTREX), an oligadenylate polymerase (TENT4B or TENT4A), and a substrate specific RNA-binding factor (ZCCHC7 or ZCCHC8). Several TRAMP-like complexes exist with specific compositions and are associated with nuclear, or nucleolar RNA exosomes. Identified in the spliceosome C complex. Component of the poly(A) tail exosome targeting (PAXT) complex made of PABPN1, ZFC3H1 and MTREX that directs a subset of long and polyadenylated poly(A) RNAs for exosomal degradation. Component of the nuclear exosome targeting (NEXT) complex composed of MTREX, ZCCHC8, and RBM7 that directs a subset of non-coding short-lived RNAs for exosomal degradation. Interacts with ZCCHC8; this interaction bridges the interaction between RBM7 and MTREX. Binds to ZFC3H1 and RBM7 in a RNase-insensitive manner. Interacts with EXOSC10; the interaction mediates the association of MTREX with nuclear RNA exosomes. Interacts with isoform 1 of NVL in an ATP-dependent manner; the interaction is required to associate NVL with nuclear RNA exosome. Interacts with WDR74; the interaction dissociation in a late stage of rRNA synthesis is required for appropriate maturation of pre-60S particles and depends on the ATPase activity of NVL. Interacts with MPHOSPH6. Interacts with the RNA cap-binding complex proteins NCBP1 and SRRT. Interacts with NRDE2; the interaction is direct and negatively regulates MTREX function in exosomal degradation by changing its conformation precluding interaction with ZFC3H1, the RNA cap-binding complex proteins NCBP1 and SRRT, and association with the exosome. Associates with the RNA exosome complex.

The protein resides in the nucleus. The protein localises to the nucleoplasm. It is found in the nucleolus. It localises to the nucleus speckle. The catalysed reaction is ATP + H2O = ADP + phosphate + H(+). With respect to regulation, activated when MTREX is incorporated into NEXT complex an the nuclear RNA exosome complex. In terms of biological role, catalyzes the ATP-dependent unwinding of RNA duplexes with a single-stranded 3' RNA extension. Central subunit of many protein complexes, namely TRAMP-like, nuclear exosome targeting (NEXT) and poly(A) tail exosome targeting (PAXT). NEXT functions as an RNA exosome cofactor that directs a subset of non-coding short-lived RNAs for exosomal degradation. NEXT is involved in surveillance and turnover of aberrant transcripts and non-coding RNAs. PAXT directs a subset of long and polyadenylated poly(A) RNAs for exosomal degradation. The RNA exosome is fundamental for the degradation of RNA in eukaryotic nuclei. Substrate targeting is facilitated by its cofactor ZCCHC8, which links to RNA-binding protein adapters. Associated with the RNA exosome complex and involved in the 3'-processing of the 7S pre-RNA to the mature 5.8S rRNA. May be involved in pre-mRNA splicing. In the context of NEXT complex can also in vitro unwind DNA:RNA heteroduplexes with a 3' poly (A) RNA tracking strand. Can promote unwinding and degradation of structured RNA substrates when associated with the nuclear exosome and its cofactors. Can displace a DNA strand while translocating on RNA to ultimately degrade the RNA within a DNA/RNA heteroduplex. Plays a role in DNA damage response. This chain is Exosome RNA helicase MTR4, found in Mus musculus (Mouse).